We begin with the raw amino-acid sequence, 667 residues long: UvrABC system protein B (667 aa).

The Helicase ATP-binding domain maps to 25–414; that stretch reads TGLQRGDKHQ…GVVVEQIIRP (390 aa). 38–45 is a binding site for ATP; that stretch reads GVTGSGKT. Positions 91 to 114 match the Beta-hairpin motif; that stretch reads YYDYYQPEAYVPTTDTFIEKDSSI. Residues 430–596 form the Helicase C-terminal domain; it reads QVDDLIHEIR…TVKKSLRSIL (167 aa). The UVR domain occupies 624–659; sequence KNEIARVKEEMLAAAANLEFEKAAELRDRMLELDKL.

It belongs to the UvrB family. In terms of assembly, forms a heterotetramer with UvrA during the search for lesions. Interacts with UvrC in an incision complex.

It is found in the cytoplasm. Its function is as follows. The UvrABC repair system catalyzes the recognition and processing of DNA lesions. A damage recognition complex composed of 2 UvrA and 2 UvrB subunits scans DNA for abnormalities. Upon binding of the UvrA(2)B(2) complex to a putative damaged site, the DNA wraps around one UvrB monomer. DNA wrap is dependent on ATP binding by UvrB and probably causes local melting of the DNA helix, facilitating insertion of UvrB beta-hairpin between the DNA strands. Then UvrB probes one DNA strand for the presence of a lesion. If a lesion is found the UvrA subunits dissociate and the UvrB-DNA preincision complex is formed. This complex is subsequently bound by UvrC and the second UvrB is released. If no lesion is found, the DNA wraps around the other UvrB subunit that will check the other stand for damage. This is UvrABC system protein B from Syntrophotalea carbinolica (strain DSM 2380 / NBRC 103641 / GraBd1) (Pelobacter carbinolicus).